The sequence spans 301 residues: Pantothenate synthetase (301 aa).

Position 30–37 (Met30–His37) interacts with ATP. Catalysis depends on His37, which acts as the Proton donor. Gln61 is a binding site for (R)-pantoate. Gln61 is a binding site for beta-alanine. Gly149–Asp152 contacts ATP. Gln155 serves as a coordination point for (R)-pantoate. ATP contacts are provided by residues Val178 and Met186 to Arg189.

This sequence belongs to the pantothenate synthetase family. As to quaternary structure, homodimer.

It localises to the cytoplasm. It carries out the reaction (R)-pantoate + beta-alanine + ATP = (R)-pantothenate + AMP + diphosphate + H(+). Its pathway is cofactor biosynthesis; (R)-pantothenate biosynthesis; (R)-pantothenate from (R)-pantoate and beta-alanine: step 1/1. In terms of biological role, catalyzes the condensation of pantoate with beta-alanine in an ATP-dependent reaction via a pantoyl-adenylate intermediate. The protein is Pantothenate synthetase of Vibrio parahaemolyticus serotype O3:K6 (strain RIMD 2210633).